A 65-amino-acid chain; its full sequence is Large ribosomal subunit protein bL35 (65 aa).

Residues 1–26 (MPKMKTNKSAQKRFKKTGSGRFKCKQ) form a disordered region. Basic residues predominate over residues 10-26 (AQKRFKKTGSGRFKCKQ).

This sequence belongs to the bacterial ribosomal protein bL35 family.

The polypeptide is Large ribosomal subunit protein bL35 (Hydrogenovibrio crunogenus (strain DSM 25203 / XCL-2) (Thiomicrospira crunogena)).